The sequence spans 362 residues: Heat-inducible transcription repressor HrcA (362 aa).

It belongs to the HrcA family.

Its function is as follows. Negative regulator of class I heat shock genes (grpE-dnaK-dnaJ and groELS operons). Prevents heat-shock induction of these operons. In Rhizobium leguminosarum bv. trifolii (strain WSM2304), this protein is Heat-inducible transcription repressor HrcA.